Consider the following 185-residue polypeptide: Peptide deformylase (185 aa).

Cysteine 94 and histidine 136 together coordinate Fe cation. Residue glutamate 137 is part of the active site. Histidine 140 is a Fe cation binding site.

This sequence belongs to the polypeptide deformylase family. The cofactor is Fe(2+).

The enzyme catalyses N-terminal N-formyl-L-methionyl-[peptide] + H2O = N-terminal L-methionyl-[peptide] + formate. Functionally, removes the formyl group from the N-terminal Met of newly synthesized proteins. Requires at least a dipeptide for an efficient rate of reaction. N-terminal L-methionine is a prerequisite for activity but the enzyme has broad specificity at other positions. The polypeptide is Peptide deformylase (Chlorobium phaeobacteroides (strain BS1)).